The sequence spans 532 residues: Beta-hexosaminidase subunit A1 (532 aa).

A signal peptide spans 1–18; sequence MIKKIILFFAVLIAIVIG. Asn72 and Asn79 each carry an N-linked (GlcNAc...) asparagine glycan. Glu308 acts as the Proton donor in catalysis. N-linked (GlcNAc...) asparagine glycans are attached at residues Asn350 and Asn427.

This sequence belongs to the glycosyl hydrolase 20 family. As to quaternary structure, dimer. Post-translationally, the N-terminus is blocked. N-glycosylated.

Its subcellular location is the lysosome. The enzyme catalyses Hydrolysis of terminal non-reducing N-acetyl-D-hexosamine residues in N-acetyl-beta-D-hexosaminides.. Responsible for the degradation of GM2 gangliosides, and a variety of other molecules containing terminal N-acetyl hexosamines. This enzyme plays a role during the slug stage of development in the maintenance of pseudoplasmodia of normal size. The chain is Beta-hexosaminidase subunit A1 (hexa1) from Dictyostelium discoideum (Social amoeba).